Here is a 294-residue protein sequence, read N- to C-terminus: 4-hydroxy-tetrahydrodipicolinate synthase (294 aa).

Thr45 is a pyruvate binding site. The Proton donor/acceptor role is filled by Tyr133. The active-site Schiff-base intermediate with substrate is Lys161. Ile203 lines the pyruvate pocket.

Belongs to the DapA family. Homotetramer; dimer of dimers.

The protein localises to the cytoplasm. The catalysed reaction is L-aspartate 4-semialdehyde + pyruvate = (2S,4S)-4-hydroxy-2,3,4,5-tetrahydrodipicolinate + H2O + H(+). Its pathway is amino-acid biosynthesis; L-lysine biosynthesis via DAP pathway; (S)-tetrahydrodipicolinate from L-aspartate: step 3/4. Its function is as follows. Catalyzes the condensation of (S)-aspartate-beta-semialdehyde [(S)-ASA] and pyruvate to 4-hydroxy-tetrahydrodipicolinate (HTPA). The chain is 4-hydroxy-tetrahydrodipicolinate synthase from Buchnera aphidicola subsp. Schizaphis graminum (strain Sg).